The sequence spans 215 residues: GTP-binding protein YPT6 (215 aa).

Residue 17-24 coordinates GTP; that stretch reads GEQGVGKT. The short motif at 39–47 is the Effector region element; sequence YQATIGIDF. Residues 65–69 and 124–127 contribute to the GTP site; these read DTAGQ and NKSD. A compositionally biased stretch (polar residues) spans 178–196; the sequence is NSESTPLDSENANSANQNK. A disordered region spans residues 178–215; it reads NSESTPLDSENANSANQNKPGVIDISTAEEQEQSACQC. Residues Cys-213 and Cys-215 are each lipidated (S-geranylgeranyl cysteine). Cys-215 is subject to Cysteine methyl ester.

The protein belongs to the small GTPase superfamily. Rab family. As to quaternary structure, interacts with YIF1, YIP3 and YIP4.

Its subcellular location is the cell membrane. Functionally, protein transport. Might participate in post-Golgi transport. The polypeptide is GTP-binding protein YPT6 (YPT6) (Saccharomyces cerevisiae (strain ATCC 204508 / S288c) (Baker's yeast)).